A 264-amino-acid polypeptide reads, in one-letter code: Small ribosomal subunit protein eS1 (264 aa).

Basic and acidic residues predominate over residues 236-255 (GEGGSGKRGEAGDKSERPEG). Residues 236 to 264 (GEGGSGKRGEAGDKSERPEGYEPPVQESV) form a disordered region.

It belongs to the eukaryotic ribosomal protein eS1 family. In terms of assembly, component of the small ribosomal subunit. Mature ribosomes consist of a small (40S) and a large (60S) subunit. The 40S subunit contains about 33 different proteins and 1 molecule of RNA (18S). The 60S subunit contains about 49 different proteins and 3 molecules of RNA (28S, 5.8S and 5S).

Its subcellular location is the cytoplasm. The chain is Small ribosomal subunit protein eS1 from Spodoptera frugiperda (Fall armyworm).